The chain runs to 145 residues: D-aminoacyl-tRNA deacylase (145 aa).

Residues 137 to 138 (GP) carry the Gly-cisPro motif, important for rejection of L-amino acids motif.

The protein belongs to the DTD family. In terms of assembly, homodimer.

The protein resides in the cytoplasm. It catalyses the reaction glycyl-tRNA(Ala) + H2O = tRNA(Ala) + glycine + H(+). The catalysed reaction is a D-aminoacyl-tRNA + H2O = a tRNA + a D-alpha-amino acid + H(+). In terms of biological role, an aminoacyl-tRNA editing enzyme that deacylates mischarged D-aminoacyl-tRNAs. Also deacylates mischarged glycyl-tRNA(Ala), protecting cells against glycine mischarging by AlaRS. Acts via tRNA-based rather than protein-based catalysis; rejects L-amino acids rather than detecting D-amino acids in the active site. By recycling D-aminoacyl-tRNA to D-amino acids and free tRNA molecules, this enzyme counteracts the toxicity associated with the formation of D-aminoacyl-tRNA entities in vivo and helps enforce protein L-homochirality. This Pseudomonas putida (strain W619) protein is D-aminoacyl-tRNA deacylase.